A 282-amino-acid polypeptide reads, in one-letter code: Ribosomal protein L11 methyltransferase (282 aa).

Positions 133, 154, 175, and 216 each coordinate S-adenosyl-L-methionine.

It belongs to the methyltransferase superfamily. PrmA family.

Its subcellular location is the cytoplasm. It catalyses the reaction L-lysyl-[protein] + 3 S-adenosyl-L-methionine = N(6),N(6),N(6)-trimethyl-L-lysyl-[protein] + 3 S-adenosyl-L-homocysteine + 3 H(+). Functionally, methylates ribosomal protein L11. The protein is Ribosomal protein L11 methyltransferase of Campylobacter jejuni subsp. doylei (strain ATCC BAA-1458 / RM4099 / 269.97).